A 425-amino-acid polypeptide reads, in one-letter code: Tryptophan synthase beta chain (425 aa).

Lys-107 is subject to N6-(pyridoxal phosphate)lysine.

This sequence belongs to the TrpB family. In terms of assembly, tetramer of two alpha and two beta chains. The cofactor is pyridoxal 5'-phosphate.

It carries out the reaction (1S,2R)-1-C-(indol-3-yl)glycerol 3-phosphate + L-serine = D-glyceraldehyde 3-phosphate + L-tryptophan + H2O. The protein operates within amino-acid biosynthesis; L-tryptophan biosynthesis; L-tryptophan from chorismate: step 5/5. Functionally, the beta subunit is responsible for the synthesis of L-tryptophan from indole and L-serine. The sequence is that of Tryptophan synthase beta chain from Synechococcus sp. (strain JA-2-3B'a(2-13)) (Cyanobacteria bacterium Yellowstone B-Prime).